The sequence spans 311 residues: Methionyl-tRNA formyltransferase (311 aa).

Residue 109–112 (SLLP) participates in (6S)-5,6,7,8-tetrahydrofolate binding.

Belongs to the Fmt family.

The catalysed reaction is L-methionyl-tRNA(fMet) + (6R)-10-formyltetrahydrofolate = N-formyl-L-methionyl-tRNA(fMet) + (6S)-5,6,7,8-tetrahydrofolate + H(+). Attaches a formyl group to the free amino group of methionyl-tRNA(fMet). The formyl group appears to play a dual role in the initiator identity of N-formylmethionyl-tRNA by promoting its recognition by IF2 and preventing the misappropriation of this tRNA by the elongation apparatus. This is Methionyl-tRNA formyltransferase from Solibacter usitatus (strain Ellin6076).